Reading from the N-terminus, the 293-residue chain is Ribosomal protein L11 methyltransferase (293 aa).

The S-adenosyl-L-methionine site is built by Thr145, Gly166, Asp188, and Asn230.

This sequence belongs to the methyltransferase superfamily. PrmA family.

It is found in the cytoplasm. The catalysed reaction is L-lysyl-[protein] + 3 S-adenosyl-L-methionine = N(6),N(6),N(6)-trimethyl-L-lysyl-[protein] + 3 S-adenosyl-L-homocysteine + 3 H(+). In terms of biological role, methylates ribosomal protein L11. This is Ribosomal protein L11 methyltransferase from Shewanella woodyi (strain ATCC 51908 / MS32).